A 279-amino-acid chain; its full sequence is Elongation factor Ts (279 aa).

The interval 79 to 82 is involved in Mg(2+) ion dislocation from EF-Tu; sequence TDFV.

It belongs to the EF-Ts family.

It localises to the cytoplasm. Functionally, associates with the EF-Tu.GDP complex and induces the exchange of GDP to GTP. It remains bound to the aminoacyl-tRNA.EF-Tu.GTP complex up to the GTP hydrolysis stage on the ribosome. The protein is Elongation factor Ts of Phytoplasma mali (strain AT).